A 132-amino-acid polypeptide reads, in one-letter code: Small ribosomal subunit protein uS8 (132 aa).

This sequence belongs to the universal ribosomal protein uS8 family. As to quaternary structure, part of the 30S ribosomal subunit. Contacts proteins S5 and S12.

Functionally, one of the primary rRNA binding proteins, it binds directly to 16S rRNA central domain where it helps coordinate assembly of the platform of the 30S subunit. This is Small ribosomal subunit protein uS8 from Brucella anthropi (strain ATCC 49188 / DSM 6882 / CCUG 24695 / JCM 21032 / LMG 3331 / NBRC 15819 / NCTC 12168 / Alc 37) (Ochrobactrum anthropi).